The following is a 100-amino-acid chain: MKQPLKNTKRSNYKRKKRERVIALIPTKTNLTSPDKSLTPLPKEIIDYKNVILLRNGITAEGKIFPRRFTKLNAKQQRYMSKAIKNARMVGLLPFVKKSK.

The protein belongs to the bacterial ribosomal protein bS18 family. As to quaternary structure, part of the 30S ribosomal subunit.

It localises to the plastid. The protein localises to the chloroplast. This Pleurastrum terricola (Filamentous green alga) protein is Small ribosomal subunit protein bS18c.